We begin with the raw amino-acid sequence, 42 residues long: Ostricacin-4 (42 aa).

3 cysteine pairs are disulfide-bonded: cysteine 8-cysteine 36, cysteine 15-cysteine 30, and cysteine 20-cysteine 37.

Its subcellular location is the secreted. Has antibacterial activity against the Gram-positive bacterium S.aureus 1056 MRSA (MIC=11.48 ug/ml) and the Gram-negative bacterium E.coli O157:H7 (MIC=12.03 ug/ml). Does not have antifungal activity against the yeast C.albicans 3153A. The polypeptide is Ostricacin-4 (Struthio camelus (Common ostrich)).